A 234-amino-acid chain; its full sequence is MQAIDIGHVTLERDGTGVFSDLTLRLTERRIGIVGRNGAGKSSLIRLITGLVTPQKGRVVVNGVDVAADRAGALGTVGLLFQNPDHQIIFPVVRDEIAFGLEQKGLKRAAALARAEAVLAAQGRADWGDRLCHTLSQGQRQLLCLMSILAMEPDWILFDEPFNALDLPTALSIEARIAGLAQNVVLVTHDPSRLTGFDRILWLEGGRIEADGPPAEVLPRYIAAMQALARAGAC.

Residues 1–230 enclose the ABC transporter domain; it reads MQAIDIGHVT…YIAAMQALAR (230 aa). 35 to 42 lines the ATP pocket; sequence GRNGAGKS.

Belongs to the ABC transporter superfamily. As to quaternary structure, part of a biotin transporter holocomplex composed of BioM, BioN and BioY. BioMN complexes can be readily purified, but not BioMY complexes. Only the BioMNY complex has ATPase activity.

The protein localises to the cell inner membrane. In terms of biological role, required for biotin uptake under very low (pM) biotin concentrations but not under higher (nM) concentrations. This Rhodobacter capsulatus (strain ATCC BAA-309 / NBRC 16581 / SB1003) protein is Biotin transport ATP-binding protein BioM (bioM).